The following is a 357-amino-acid chain: COP9 signalosome complex subunit 5a (357 aa).

The residue at position 1 (M1) is an N-acetylmethionine. The MPN domain maps to 59–196 (VHISALALLK…IGAFRTYPEG (138 aa)). 3 residues coordinate Zn(2+): H142, H144, and D155. Positions 142–155 (HSHPGYGCWLSGID) match the JAMM motif motif. The interval 338-357 (ARQSKKSADDSSDPEPMITS) is disordered.

Belongs to the peptidase M67A family. CSN5 subfamily. In terms of assembly, component of the CSN complex, probably composed of CSN1, CSN2, CSN3, CSN4, CSN5 (CSN5A or CSN5B), CSN6 (CSN6A or CSN6B), CSN7 and CSN8. CSN5A or CSN5B are present within distinct CSN complexes each containing only one copy of CSN5. Interacts with itself. In the complex, it is located in the center and probably interacts directly with CSN4 and CSN6A or CSN6B. Present also in subcomplex forms which inculdes CSN3. Also exists as monomeric form. Interacts with CYT1 in vitro, but not in planta. Requires a divalent metal cation as cofactor. Ubiquitously expressed. Highly expressed in flowers and roots. Expressed at lower level in seedlings and siliques.

It is found in the cytoplasm. It localises to the nucleus. Its function is as follows. Probable protease subunit of the COP9 signalosome complex (CSN), a complex involved in various cellular and developmental processes such as photomorphogenesis and auxin and jasmonate responses. The CSN complex is an essential regulator of the ubiquitin (Ubl) conjugation pathway by mediating the deneddylation of the cullin subunits of the SCF-type E3 ligase complexes, leading to decrease the Ubl ligase activity of SCF. In the complex, it probably acts as the catalytic center that mediates the cleavage of Nedd8 from cullins. It however has no metalloprotease activity by itself and requires the other subunits of the CSN complex. The CSN complex is involved in repression of photomorphogenesis in darkness by regulating the activity of COP1-containing Ubl ligase complexes. The complex is also required for degradation of PSIAA6 by regulating the activity of the Ubl ligase SCF-TIR complex. Involved in CSN's deneddylation/derubylation activity. Required for the deneddylation of all cullins. Essential for the structural integrity of the CSN holocomplex. The sequence is that of COP9 signalosome complex subunit 5a from Arabidopsis thaliana (Mouse-ear cress).